A 598-amino-acid chain; its full sequence is Elongation factor 4 (598 aa).

One can recognise a tr-type G domain in the interval 4-181 (SKIRNFSIIA…AVIEKIPAPK (178 aa)). GTP-binding positions include 16-21 (DHGKST) and 128-131 (NKID).

Belongs to the TRAFAC class translation factor GTPase superfamily. Classic translation factor GTPase family. LepA subfamily.

It is found in the cell membrane. The catalysed reaction is GTP + H2O = GDP + phosphate + H(+). Its function is as follows. Required for accurate and efficient protein synthesis under certain stress conditions. May act as a fidelity factor of the translation reaction, by catalyzing a one-codon backward translocation of tRNAs on improperly translocated ribosomes. Back-translocation proceeds from a post-translocation (POST) complex to a pre-translocation (PRE) complex, thus giving elongation factor G a second chance to translocate the tRNAs correctly. Binds to ribosomes in a GTP-dependent manner. The chain is Elongation factor 4 from Mycoplasma mobile (strain ATCC 43663 / 163K / NCTC 11711) (Mesomycoplasma mobile).